Reading from the N-terminus, the 183-residue chain is Acyl-homoserine-lactone synthase (183 aa).

Belongs to the autoinducer synthase family.

It catalyses the reaction a fatty acyl-[ACP] + S-adenosyl-L-methionine = an N-acyl-L-homoserine lactone + S-methyl-5'-thioadenosine + holo-[ACP] + H(+). Involved in the synthesis of the acyl-homoserine lactone (AHL) signal N-(3-hydroxydodecanoyl)-L-HSL (3-hydroxy-C(12)-HSL or OH-dDHL). Probably part of a quorum-sensing system with AnoR. This chain is Acyl-homoserine-lactone synthase, found in Acinetobacter nosocomialis.